A 315-amino-acid chain; its full sequence is MSANESVVTADLKPRVPSTGSVDVLIVSGRSGSGKTSVLNILEDLGYYVIDNMPLSLLSDAAHKLTEDGGITNLALGVDIRTLKADSASFSAIYDTLLNSYGPDKVRIMYVTAQESVLVARFAATRRVHPLMAVNDYEIKNLPSAIIKETETLRPISGNADITIDTSQLNIHQLKELVREYVGADNQITVNVLSFGFKYGVPIDADFVFDVRILPNPHWEPQLRVKTGKDTEVAAFFANFPQVEEMKQDIYRYLDRWLPEFLHNNRHTVTVAVGCTGGKHRSVFLAESLYSMLSESLPREIKVMVKHREKAHWKA.

Gly-29–Thr-36 is a binding site for ATP. Asp-79 to Thr-82 contributes to the GTP binding site.

It belongs to the RapZ-like family.

In terms of biological role, displays ATPase and GTPase activities. This Psychrobacter sp. (strain PRwf-1) protein is Nucleotide-binding protein PsycPRwf_2129.